A 95-amino-acid polypeptide reads, in one-letter code: MTVSNTVDQYTIMSGDRSKIKDLLCNRLTECGWRDEVRLLCRNILLEKSNSSNGVTVEQLIAEVTPKARTLVPDAVKKELLMKIRTILAENEAEN.

It belongs to the ENY2 family. In terms of assembly, component of the nuclear pore complex (NPC)-associated AMEX complex (anchoring and mRNA export complex), composed of at least e(y)2 and xmas-2. Component of the SAGA transcription coactivator-HAT complexes, at least composed of Ada2b, e(y)2, Pcaf/Gcn5, Taf10 and Nipped-A/Trrap. Within the SAGA complex, e(y)2, Sgf11, and not/nonstop form an additional subcomplex of SAGA called the DUB module (deubiquitination module). Component of the THO complex, composed of at least e(y)2, HPR1, THO2, THOC5, THOC6 and THOC7. Interacts with e(y)1. Interacts with su(Hw) (via zinc fingers). Interacts with xmas-2; required for localization to the nuclear periphery. Interacts with the nuclear pore complex (NPC).

It localises to the nucleus. The protein localises to the nucleoplasm. Its subcellular location is the cytoplasm. In terms of biological role, involved in mRNA export coupled transcription activation by association with both the AMEX and the SAGA complexes. The SAGA complex is a multiprotein complex that activates transcription by remodeling chromatin and mediating histone acetylation and deubiquitination. Within the SAGA complex, participates in a subcomplex that specifically deubiquitinates histone H2B. The SAGA complex is recruited to specific gene promoters by activators, where it is required for transcription. Required for nuclear receptor-mediated transactivation. Involved in transcription elongation by recruiting the THO complex onto nascent mRNA. The AMEX complex functions in docking export-competent ribonucleoprotein particles (mRNPs) to the nuclear entrance of the nuclear pore complex (nuclear basket). AMEX participates in mRNA export and accurate chromatin positioning in the nucleus by tethering genes to the nuclear periphery. This is Enhancer of yellow 2 transcription factor from Drosophila virilis (Fruit fly).